Consider the following 481-residue polypeptide: Cobyric acid synthase (481 aa).

The GATase cobBQ-type domain maps to 248 to 435 (ALTVAWLAFS…LHGMFGSDRF (188 aa)). C330 serves as the catalytic Nucleophile. The active site involves H427.

The protein belongs to the CobB/CobQ family. CobQ subfamily.

It participates in cofactor biosynthesis; adenosylcobalamin biosynthesis. In terms of biological role, catalyzes amidations at positions B, D, E, and G on adenosylcobyrinic A,C-diamide. NH(2) groups are provided by glutamine, and one molecule of ATP is hydrogenolyzed for each amidation. This Cereibacter sphaeroides (strain ATCC 17025 / ATH 2.4.3) (Rhodobacter sphaeroides) protein is Cobyric acid synthase.